Reading from the N-terminus, the 186-residue chain is Ribosome-recycling factor (186 aa).

It belongs to the RRF family.

It localises to the cytoplasm. In terms of biological role, responsible for the release of ribosomes from messenger RNA at the termination of protein biosynthesis. May increase the efficiency of translation by recycling ribosomes from one round of translation to another. This is Ribosome-recycling factor from Chelativorans sp. (strain BNC1).